Here is a 375-residue protein sequence, read N- to C-terminus: Chaperone protein DnaJ (375 aa).

Residues 5–70 form the J domain; that stretch reads DYYEVLGVNR…QKKGAYDRYG (66 aa). Residues 134–212 form a CR-type zinc finger; the sequence is GAEKTIRIPT…CGGAGRVKKQ (79 aa). The Zn(2+) site is built by Cys-147, Cys-150, Cys-164, Cys-167, Cys-186, Cys-189, Cys-200, and Cys-203. CXXCXGXG motif repeat units lie at residues 147–154, 164–171, 186–193, and 200–207; these read CGTCHGSG, CPTCGGAG, CPKCHGTG, and CGDCGGAG.

Belongs to the DnaJ family. In terms of assembly, homodimer. Zn(2+) is required as a cofactor.

It is found in the cytoplasm. Functionally, participates actively in the response to hyperosmotic and heat shock by preventing the aggregation of stress-denatured proteins and by disaggregating proteins, also in an autonomous, DnaK-independent fashion. Unfolded proteins bind initially to DnaJ; upon interaction with the DnaJ-bound protein, DnaK hydrolyzes its bound ATP, resulting in the formation of a stable complex. GrpE releases ADP from DnaK; ATP binding to DnaK triggers the release of the substrate protein, thus completing the reaction cycle. Several rounds of ATP-dependent interactions between DnaJ, DnaK and GrpE are required for fully efficient folding. Also involved, together with DnaK and GrpE, in the DNA replication of plasmids through activation of initiation proteins. The protein is Chaperone protein DnaJ of Azoarcus sp. (strain BH72).